The sequence spans 530 residues: Hyccin 2 (530 aa).

Residues threonine 30 and threonine 306 each carry the phosphothreonine modification. Residues serine 321 and serine 341 each carry the phosphoserine modification. The interval 328–404 (RREGAEGLNG…SNESPRDSVV (77 aa)) is disordered. The segment covering 353 to 373 (SGASLSSQPHGTKPPSSSQRG) has biased composition (polar residues). Phosphoserine is present on residues serine 430, serine 442, serine 444, and serine 491. The tract at residues 502–530 (EGKELLSPGAPLTKQSRSPSFNMQLISQV) is disordered. Residues 514 to 530 (TKQSRSPSFNMQLISQV) show a composition bias toward polar residues.

This sequence belongs to the Hyccin family. As to quaternary structure, component of a phosphatidylinositol 4-kinase (PI4K) complex, composed of PI4KA, EFR3 (EFR3A or EFR3B), TTC7 (TTC7A or TTC7B) and HYCC (HYCC1 or HYCC2). In terms of tissue distribution, expressed in the central nervous system. Expressed at much lower level in oligodendrocytes than in neurons.

It localises to the cytoplasm. The protein localises to the cytosol. It is found in the cell membrane. Component of a complex required to localize phosphatidylinositol 4-kinase (PI4K) to the plasma membrane. The sequence is that of Hyccin 2 (Hycc2) from Mus musculus (Mouse).